Reading from the N-terminus, the 226-residue chain is Phosphoribosyl-dephospho-CoA transferase (226 aa).

Active-site residues include Asp148 and Asp150.

It belongs to the MdcG family.

The catalysed reaction is apo-[malonate decarboxylase ACP] + 2'-(5''-triphospho-alpha-D-ribosyl)-3'-dephospho-CoA = holo-[malonate decarboxylase ACP] + diphosphate. Functionally, transfers 2'-(5-triphosphoribosyl)-3'-dephosphocoenzyme-A to the apo-[acyl-carrier-protein] of the malonate decarboxylase to yield holo-[acyl-carrier-protein]. The protein is Phosphoribosyl-dephospho-CoA transferase of Bradyrhizobium diazoefficiens (strain JCM 10833 / BCRC 13528 / IAM 13628 / NBRC 14792 / USDA 110).